Consider the following 268-residue polypeptide: Basic endochitinase CHB4 (268 aa).

A signal peptide spans 1–24 (MALTKLSLVLFLCFLGLYSETVKS). Residues 25–59 (QNCGCAPNLCCSQFGYCGSTDAYCGTGCRSGPCRS) form the Chitin-binding type-1 domain. Cystine bridges form between cysteine 27–cysteine 35, cysteine 29–cysteine 41, cysteine 34–cysteine 48, cysteine 52–cysteine 57, cysteine 92–cysteine 137, cysteine 150–cysteine 159, and cysteine 236–cysteine 268. Positions 71 to 268 (SVGSIVTQAF…GVDPGPNLSC (198 aa)) are catalytic. The active-site Proton donor is the glutamate 132. An N-linked (GlcNAc...) asparagine glycan is attached at asparagine 265.

The protein belongs to the glycosyl hydrolase 19 family. Chitinase class I subfamily.

The protein localises to the secreted. It localises to the extracellular space. It carries out the reaction Random endo-hydrolysis of N-acetyl-beta-D-glucosaminide (1-&gt;4)-beta-linkages in chitin and chitodextrins.. Defense against chitin-containing fungal pathogens. The chain is Basic endochitinase CHB4 from Brassica napus (Rape).